We begin with the raw amino-acid sequence, 762 residues long: Putative cation exchanger YDL206W (762 aa).

The N-terminal stretch at Met-1–Ser-26 is a signal peptide. Over Ser-27 to Ser-30 the chain is Extracellular. N-linked (GlcNAc...) asparagine glycosylation occurs at Asn-28. The helical transmembrane segment at Ile-31–Val-51 threads the bilayer. Residues Thr-52–Ser-102 are Cytoplasmic-facing. The helical transmembrane segment at Leu-103–Met-123 threads the bilayer. Over Gly-124–Tyr-156 the chain is Extracellular. Residue Asn-148 is glycosylated (N-linked (GlcNAc...) asparagine). A helical transmembrane segment spans residues Ile-157 to Gly-177. Residue Arg-178 is a topological domain, cytoplasmic. Residues Leu-179–Ile-199 traverse the membrane as a helical segment. The Extracellular portion of the chain corresponds to Lys-200–Glu-501. 2 N-linked (GlcNAc...) asparagine glycosylation sites follow: Asn-280 and Asn-329. A helical transmembrane segment spans residues Ile-502–Leu-522. The Cytoplasmic segment spans residues Ser-523 to Gln-554. The chain crosses the membrane as a helical span at residues Leu-555–Leu-575. The Extracellular segment spans residues Tyr-576 to Asp-589. Residues Ile-590–Ile-610 traverse the membrane as a helical segment. At Val-611 to Thr-615 the chain is on the cytoplasmic side. A helical transmembrane segment spans residues His-616–Gly-636. Residues Asn-637–Lys-650 are Extracellular-facing. Asn-645 is a glycosylation site (N-linked (GlcNAc...) asparagine). The helical transmembrane segment at Ile-651–Phe-671 threads the bilayer. The Cytoplasmic portion of the chain corresponds to Gly-672–Asn-709. The chain crosses the membrane as a helical span at residues Leu-710–Leu-730. Residues Asn-731–Lys-738 are Extracellular-facing. A helical transmembrane segment spans residues Ile-739 to Val-759. Over His-760 to Val-762 the chain is Cytoplasmic.

This sequence belongs to the Ca(2+):cation antiporter (CaCA) (TC 2.A.19) family.

It localises to the membrane. Its function is as follows. Putative cation exchanger. The chain is Putative cation exchanger YDL206W from Saccharomyces cerevisiae (strain ATCC 204508 / S288c) (Baker's yeast).